The sequence spans 322 residues: MPEAAPPVADARGSSPTATTGPGADATLSAVEPFLAHLQIERQVSAHTLDAYRRDLAALIGWASAQGSEDVAQLDSAQLRKFVTAEHRRGLSPKSLQRRLSACRSYYAWLLKHGRIATSPAAALRAPKAPRKLPQVLDADEAVRLVEVPTDAPLGLRDRALLELFYSSGLRLSELCALRWRDLDLDSGLVTVLGKGGKQRLVPVGSHAVAALRAWQRDSGGSAQTHVFPGRAGGAISQRAVQIRIKQLAVRQGMFKHVHPHMLRHSFASHILESSGDLRGVQELLGHSDIATTQIYTHLDFQHLAKVYDAAHPRAKRKKATE.

Residues 1–25 are disordered; that stretch reads MPEAAPPVADARGSSPTATTGPGAD. Low complexity predominate over residues 16-25; it reads PTATTGPGAD. The Core-binding (CB) domain occupies 25 to 111; it reads DATLSAVEPF…ACRSYYAWLL (87 aa). The 178-residue stretch at 132 to 309 folds into the Tyr recombinase domain; the sequence is KLPQVLDADE…DFQHLAKVYD (178 aa). Residues Arg-171, Lys-195, His-261, Arg-264, and His-287 contribute to the active site. The O-(3'-phospho-DNA)-tyrosine intermediate role is filled by Tyr-296.

The protein belongs to the 'phage' integrase family. XerC subfamily. Forms a cyclic heterotetrameric complex composed of two molecules of XerC and two molecules of XerD.

It localises to the cytoplasm. Functionally, site-specific tyrosine recombinase, which acts by catalyzing the cutting and rejoining of the recombining DNA molecules. The XerC-XerD complex is essential to convert dimers of the bacterial chromosome into monomers to permit their segregation at cell division. It also contributes to the segregational stability of plasmids. This is Tyrosine recombinase XerC from Xanthomonas campestris pv. campestris (strain 8004).